Reading from the N-terminus, the 503-residue chain is Probable cytosol aminopeptidase (503 aa).

Residues K274 and D279 each contribute to the Mn(2+) site. K286 is a catalytic residue. Residues D297, D356, and E358 each contribute to the Mn(2+) site. R360 is an active-site residue.

Belongs to the peptidase M17 family. Requires Mn(2+) as cofactor.

It localises to the cytoplasm. It carries out the reaction Release of an N-terminal amino acid, Xaa-|-Yaa-, in which Xaa is preferably Leu, but may be other amino acids including Pro although not Arg or Lys, and Yaa may be Pro. Amino acid amides and methyl esters are also readily hydrolyzed, but rates on arylamides are exceedingly low.. The catalysed reaction is Release of an N-terminal amino acid, preferentially leucine, but not glutamic or aspartic acids.. Functionally, presumably involved in the processing and regular turnover of intracellular proteins. Catalyzes the removal of unsubstituted N-terminal amino acids from various peptides. The polypeptide is Probable cytosol aminopeptidase (Paraburkholderia phymatum (strain DSM 17167 / CIP 108236 / LMG 21445 / STM815) (Burkholderia phymatum)).